Consider the following 513-residue polypeptide: Maturase K (513 aa).

Belongs to the intron maturase 2 family. MatK subfamily.

The protein localises to the plastid. It is found in the chloroplast. Functionally, usually encoded in the trnK tRNA gene intron. Probably assists in splicing its own and other chloroplast group II introns. This is Maturase K from Keckiella cordifolia (Heart-leafed penstemon).